The following is a 156-amino-acid chain: Small ribosomal subunit protein uS7c (156 aa).

It belongs to the universal ribosomal protein uS7 family. Part of the 30S ribosomal subunit.

Its subcellular location is the plastid. The protein resides in the chloroplast. Functionally, one of the primary rRNA binding proteins, it binds directly to 16S rRNA where it nucleates assembly of the head domain of the 30S subunit. This is Small ribosomal subunit protein uS7c (rps7) from Cycas revoluta (Sago palm).